A 1071-amino-acid chain; its full sequence is ATP-dependent helicase/deoxyribonuclease subunit B (1071 aa).

This sequence belongs to the helicase family. AddB/RexB type 2 subfamily. As to quaternary structure, heterodimer of AddA and RexB. Mg(2+) is required as a cofactor.

In terms of biological role, the heterodimer acts as both an ATP-dependent DNA helicase and an ATP-dependent, dual-direction single-stranded exonuclease. Recognizes the chi site generating a DNA molecule suitable for the initiation of homologous recombination. This subunit has 5' -&gt; 3' nuclease activity but not helicase activity. The chain is ATP-dependent helicase/deoxyribonuclease subunit B from Streptococcus pyogenes serotype M4 (strain MGAS10750).